The following is a 930-amino-acid chain: Wings apart-like protein 1 (930 aa).

The disordered stretch occupies residues 540–566; that stretch reads FSPTSMSGSQSSVSGNEPTTSKTRVGS. Over residues 541 to 553 the composition is skewed to low complexity; the sequence is SPTSMSGSQSSVS. Polar residues predominate over residues 554–566; it reads GNEPTTSKTRVGS. The WAPL domain maps to 854–909; that stretch reads KEAEKMIVEAYSALLLAFLSTESRSIRNSIKDYLPKRNLAILVPVLERFVAFHMTL.

This sequence belongs to the WAPL family. As to quaternary structure, interacts with the cohesin complex throughout the cell cycle. In terms of tissue distribution, expressed in roots, leaves, buds and siliques.

The protein localises to the nucleus. Its subcellular location is the chromosome. Its function is as follows. Regulator of sister chromatid cohesion in meiosis which negatively regulates cohesin association with chromatin, acting as an antagonist of CTF7. Cohesion ensures that chromosome partitioning is accurate in both meiotic and mitotic cells and plays an important role in DNA repair. Essential for the prophase removal of cohesin during meiosis thus determining the timely release of meiotic cohesion. Important for proper spindle attachment and assembly during meiosis. Helps to prevent abnormal centromere association during prophase I in meiocytes. Required for early embryonic patterning. Also involved in chromosome segregation during mitosis. The sequence is that of Wings apart-like protein 1 from Arabidopsis thaliana (Mouse-ear cress).